The sequence spans 424 residues: Enolase (424 aa).

Q162 contacts (2R)-2-phosphoglycerate. Residue E204 is the Proton donor of the active site. Mg(2+)-binding residues include D241, E284, and D311. (2R)-2-phosphoglycerate is bound by residues K336, R365, S366, and K387. K336 (proton acceptor) is an active-site residue.

The protein belongs to the enolase family. The cofactor is Mg(2+).

Its subcellular location is the cytoplasm. It is found in the secreted. The protein resides in the cell surface. It carries out the reaction (2R)-2-phosphoglycerate = phosphoenolpyruvate + H2O. It functions in the pathway carbohydrate degradation; glycolysis; pyruvate from D-glyceraldehyde 3-phosphate: step 4/5. Its function is as follows. Catalyzes the reversible conversion of 2-phosphoglycerate (2-PG) into phosphoenolpyruvate (PEP). It is essential for the degradation of carbohydrates via glycolysis. This chain is Enolase, found in Mesorhizobium japonicum (strain LMG 29417 / CECT 9101 / MAFF 303099) (Mesorhizobium loti (strain MAFF 303099)).